The chain runs to 166 residues: NAD(P)H-quinone oxidoreductase subunit I, chloroplastic (166 aa).

4Fe-4S ferredoxin-type domains follow at residues 55–84 (GRIHFEFDKCIACEVCVRVCPIDLPVVDWK) and 95–124 (LNYSIDFGICIFCGNCVEYCPTNCLSMTEE). 8 residues coordinate [4Fe-4S] cluster: cysteine 64, cysteine 67, cysteine 70, cysteine 74, cysteine 104, cysteine 107, cysteine 110, and cysteine 114.

It belongs to the complex I 23 kDa subunit family. NDH is composed of at least 16 different subunits, 5 of which are encoded in the nucleus. The cofactor is [4Fe-4S] cluster.

Its subcellular location is the plastid. It is found in the chloroplast thylakoid membrane. It carries out the reaction a plastoquinone + NADH + (n+1) H(+)(in) = a plastoquinol + NAD(+) + n H(+)(out). The catalysed reaction is a plastoquinone + NADPH + (n+1) H(+)(in) = a plastoquinol + NADP(+) + n H(+)(out). NDH shuttles electrons from NAD(P)H:plastoquinone, via FMN and iron-sulfur (Fe-S) centers, to quinones in the photosynthetic chain and possibly in a chloroplast respiratory chain. The immediate electron acceptor for the enzyme in this species is believed to be plastoquinone. Couples the redox reaction to proton translocation, and thus conserves the redox energy in a proton gradient. This Silphium perfoliatum (Cup plant) protein is NAD(P)H-quinone oxidoreductase subunit I, chloroplastic.